Consider the following 882-residue polypeptide: Leucine--tRNA ligase (882 aa).

The short motif at P43–H53 is the 'HIGH' region element. Residues K634 to S638 carry the 'KMSKS' region motif. K637 is a binding site for ATP.

It belongs to the class-I aminoacyl-tRNA synthetase family.

It localises to the cytoplasm. The catalysed reaction is tRNA(Leu) + L-leucine + ATP = L-leucyl-tRNA(Leu) + AMP + diphosphate. The polypeptide is Leucine--tRNA ligase (Rhodopseudomonas palustris (strain BisB18)).